The chain runs to 1151 residues: Protein BREAST CANCER SUSCEPTIBILITY 2 homolog A (1151 aa).

BRCA2 repeat units lie at residues 63 to 97 (MPGE…EKVT), 116 to 150 (TAET…SDKI), 163 to 197 (FGVS…LEED), and 257 to 291 (LKVP…DPEL). The tract at residues 408–427 (GFIPRGRQPGRPADQPLVDI) is disordered.

In terms of assembly, interacts with RAD51 and DMC1. Interacts with DSS1(I). Expressed in flower buds.

Functionally, involved in double-strand break repair and/or homologous recombination by mediating RAD51- and DMC1-facilitated DNA repair. Plays an essential role in both somatic and meiotic homologous recombination. Is crucial for the formation of RAD51 and DMC1 foci during male meiotic homologous recombination in prophase I. In Arabidopsis thaliana (Mouse-ear cress), this protein is Protein BREAST CANCER SUSCEPTIBILITY 2 homolog A.